The chain runs to 287 residues: Inositol-1-monophosphatase (287 aa).

Residues Glu-79, Asp-96, Leu-98, and Asp-99 each coordinate Mg(2+). Glu-79 lines the substrate pocket. Substrate-binding positions include 98 to 101 (LDGT), Arg-195, and Asp-224. Residue Asp-224 participates in Mg(2+) binding.

Belongs to the inositol monophosphatase superfamily. It depends on Mg(2+) as a cofactor.

It catalyses the reaction a myo-inositol phosphate + H2O = myo-inositol + phosphate. The protein is Inositol-1-monophosphatase (suhB) of Synechocystis sp. (strain ATCC 27184 / PCC 6803 / Kazusa).